A 151-amino-acid polypeptide reads, in one-letter code: D-aminoacyl-tRNA deacylase (151 aa).

The Gly-cisPro motif, important for rejection of L-amino acids motif lies at 136 to 137 (GP).

It belongs to the DTD family. Homodimer.

It localises to the cytoplasm. The enzyme catalyses glycyl-tRNA(Ala) + H2O = tRNA(Ala) + glycine + H(+). It catalyses the reaction a D-aminoacyl-tRNA + H2O = a tRNA + a D-alpha-amino acid + H(+). Its function is as follows. An aminoacyl-tRNA editing enzyme that deacylates mischarged D-aminoacyl-tRNAs. Also deacylates mischarged glycyl-tRNA(Ala), protecting cells against glycine mischarging by AlaRS. Acts via tRNA-based rather than protein-based catalysis; rejects L-amino acids rather than detecting D-amino acids in the active site. By recycling D-aminoacyl-tRNA to D-amino acids and free tRNA molecules, this enzyme counteracts the toxicity associated with the formation of D-aminoacyl-tRNA entities in vivo and helps enforce protein L-homochirality. This Streptococcus gordonii (strain Challis / ATCC 35105 / BCRC 15272 / CH1 / DL1 / V288) protein is D-aminoacyl-tRNA deacylase.